A 605-amino-acid chain; its full sequence is uncharacterized protein (605 aa).

Positions 22-93 (FTEPARFYPS…KQGTAVHGAE (72 aa)) are disordered. The span at 46–57 (SENASSSVPSHS) shows a compositional bias: low complexity.

This is an uncharacterized protein from Treponema pallidum (strain Nichols).